Here is a 461-residue protein sequence, read N- to C-terminus: Porin AaxA (461 aa).

Positions 1-22 (MSFRSVLLTALLSLSFTTTMQA) are cleaved as a signal peptide.

This sequence belongs to the OprB family.

The protein resides in the cell outer membrane. Its function is as follows. Facilitates L-arginine uptake, as part of the AaxABC system. The arginine uptake by the bacterium in the macrophage may be a virulence factor against the host innate immune response. The sequence is that of Porin AaxA (aaxA) from Chlamydia trachomatis serovar D (strain ATCC VR-885 / DSM 19411 / UW-3/Cx).